Here is a 399-residue protein sequence, read N- to C-terminus: Lipoyl synthase, mitochondrial (399 aa).

The transit peptide at 1–30 directs the protein to the mitochondrion; sequence MRAVLELTRRRARNARFARARAVVGARARA. Over residues 31–41 the composition is skewed to basic and acidic residues; that stretch reads ADAQELRDDSK. A disordered region spans residues 31–58; the sequence is ADAQELRDDSKGGSSVDKATSTAAEARE. [4Fe-4S] cluster-binding residues include Cys131, Cys136, Cys142, Cys162, Cys166, Cys169, and Ser375. The region spanning 145 to 364 is the Radical SAM core domain; the sequence is GGDGKTATAT…QEIAEEMGFL (220 aa).

The protein belongs to the radical SAM superfamily. Lipoyl synthase family. Requires [4Fe-4S] cluster as cofactor.

The protein localises to the mitochondrion. The catalysed reaction is [[Fe-S] cluster scaffold protein carrying a second [4Fe-4S](2+) cluster] + N(6)-octanoyl-L-lysyl-[protein] + 2 oxidized [2Fe-2S]-[ferredoxin] + 2 S-adenosyl-L-methionine + 4 H(+) = [[Fe-S] cluster scaffold protein] + N(6)-[(R)-dihydrolipoyl]-L-lysyl-[protein] + 4 Fe(3+) + 2 hydrogen sulfide + 2 5'-deoxyadenosine + 2 L-methionine + 2 reduced [2Fe-2S]-[ferredoxin]. The protein operates within protein modification; protein lipoylation via endogenous pathway; protein N(6)-(lipoyl)lysine from octanoyl-[acyl-carrier-protein]: step 2/2. Its function is as follows. Catalyzes the radical-mediated insertion of two sulfur atoms into the C-6 and C-8 positions of the octanoyl moiety bound to the lipoyl domains of lipoate-dependent enzymes, thereby converting the octanoylated domains into lipoylated derivatives. The sequence is that of Lipoyl synthase, mitochondrial from Ostreococcus lucimarinus (strain CCE9901).